The primary structure comprises 339 residues: Methylthioribose-1-phosphate isomerase (339 aa).

Residues 49-51, Arg86, and Gln187 contribute to the substrate site; that span reads RGA. Asp228 serves as the catalytic Proton donor. Residue 238–239 participates in substrate binding; sequence NK.

Belongs to the eIF-2B alpha/beta/delta subunits family. MtnA subfamily.

It catalyses the reaction 5-(methylsulfanyl)-alpha-D-ribose 1-phosphate = 5-(methylsulfanyl)-D-ribulose 1-phosphate. The protein operates within amino-acid biosynthesis; L-methionine biosynthesis via salvage pathway; L-methionine from S-methyl-5-thio-alpha-D-ribose 1-phosphate: step 1/6. Its function is as follows. Catalyzes the interconversion of methylthioribose-1-phosphate (MTR-1-P) into methylthioribulose-1-phosphate (MTRu-1-P). The polypeptide is Methylthioribose-1-phosphate isomerase (Cronobacter sakazakii (strain ATCC BAA-894) (Enterobacter sakazakii)).